Here is a 173-residue protein sequence, read N- to C-terminus: Protein GrpE (173 aa).

A compositionally biased stretch (basic and acidic residues) spans 1–20 (MQDEFKTDTPRTEAGSEKET). The tract at residues 1 to 23 (MQDEFKTDTPRTEAGSEKETMPS) is disordered.

The protein belongs to the GrpE family. Homodimer.

The protein resides in the cytoplasm. In terms of biological role, participates actively in the response to hyperosmotic and heat shock by preventing the aggregation of stress-denatured proteins, in association with DnaK and GrpE. It is the nucleotide exchange factor for DnaK and may function as a thermosensor. Unfolded proteins bind initially to DnaJ; upon interaction with the DnaJ-bound protein, DnaK hydrolyzes its bound ATP, resulting in the formation of a stable complex. GrpE releases ADP from DnaK; ATP binding to DnaK triggers the release of the substrate protein, thus completing the reaction cycle. Several rounds of ATP-dependent interactions between DnaJ, DnaK and GrpE are required for fully efficient folding. In Thiobacillus denitrificans (strain ATCC 25259 / T1), this protein is Protein GrpE.